Consider the following 696-residue polypeptide: Iron-sulfur clusters transporter ATM1, mitochondrial (696 aa).

A mitochondrion-targeting transit peptide spans 1-67 (MIKWGLFGAV…RFFSSSHKLG (67 aa)). At 68–109 (VNTKEDSSTYLFGRKISTSESKMLKSLLVTIWPKNKPSFKLR) the chain is on the mitochondrial matrix side. Residues 110 to 131 (VIFALSLLIASKLLNVEVPFFF) traverse the membrane as a helical segment. The ABC transmembrane type-1 domain occupies 110–400 (VIFALSLLIA…LGSVYRELKQ (291 aa)). Over 132-154 (KKIIDEMNVDWNDQLGTVGTVIG) the chain is Mitochondrial intermembrane. A helical membrane pass occupies residues 155-178 (TLIIAYGGARFGAVLFGELRNAVF). Topologically, residues 179-227 (ASVAQTAIKRVAHNTFVHLLNMDLNFHLSRQTGGLTRAIDRGTKGISYV) are mitochondrial matrix. Residues 228–251 (LNAMVFHIIPISFEISMVCGILIY) form a helical membrane-spanning segment. Residue Asn-252 is a topological domain, mitochondrial intermembrane. Residues 253-273 (YGLSFAAVTLATMLSYSVFTI) form a helical membrane-spanning segment. Over 274–339 (KTTAWRTGFR…ASVKVATSLA (66 aa)) the chain is Mitochondrial matrix. Glutathione contacts are provided by residues 279–283 (RTGFR) and 342–345 (NAGQ). The helical transmembrane segment at 340 to 358 (YLNAGQNFIFTSALTAMMY) threads the bilayer. Residues 359-373 (MGCNGVATGSLTVGD) lie on the Mitochondrial intermembrane side of the membrane. Residues 374-395 (LVLINQLVFQLSVPLSFLGSVY) traverse the membrane as a helical segment. Residue Gly-392 participates in glutathione binding. Residues 396–696 (RELKQSLLDM…EYAKETEEQK (301 aa)) are Mitochondrial matrix-facing. In terms of domain architecture, ABC transporter spans 438 to 674 (IKFENVTFGY…PNSLYSQLWN (237 aa)). Residues Tyr-447 and 471 to 482 (GPSGSGKSTILR) each bind ATP.

This sequence belongs to the ABC transporter superfamily. ABCB family. Heavy Metal importer (TC 3.A.1.210) subfamily. In terms of assembly, homodimer.

Its subcellular location is the mitochondrion inner membrane. Functionally, performs an essential function in the generation of cytoplasmic iron-sulfur proteins by mediating the ATP-dependent export of Fe/S cluster precursors synthesized by NFS1 and other mitochondrial proteins. Hydrolyzes ATP. Binds glutathione and may function by transporting a glutathione-conjugated iron-sulfur compound. The chain is Iron-sulfur clusters transporter ATM1, mitochondrial from Debaryomyces hansenii (strain ATCC 36239 / CBS 767 / BCRC 21394 / JCM 1990 / NBRC 0083 / IGC 2968) (Yeast).